The sequence spans 488 residues: Ribulose bisphosphate carboxylase large chain (488 aa).

Substrate contacts are provided by Asn-127 and Thr-177. Residue Lys-179 is the Proton acceptor of the active site. Position 181 (Lys-181) interacts with substrate. 3 residues coordinate Mg(2+): Lys-205, Asp-207, and Glu-208. Lys-205 is modified (N6-carboxylysine). The active-site Proton acceptor is the His-297. The substrate site is built by Arg-298, His-330, and Ser-382.

This sequence belongs to the RuBisCO large chain family. Type I subfamily. In terms of assembly, heterohexadecamer of 8 large chains and 8 small chains. Mg(2+) serves as cofactor.

The protein localises to the plastid. It localises to the chloroplast. It carries out the reaction 2 (2R)-3-phosphoglycerate + 2 H(+) = D-ribulose 1,5-bisphosphate + CO2 + H2O. It catalyses the reaction D-ribulose 1,5-bisphosphate + O2 = 2-phosphoglycolate + (2R)-3-phosphoglycerate + 2 H(+). In terms of biological role, ruBisCO catalyzes two reactions: the carboxylation of D-ribulose 1,5-bisphosphate, the primary event in carbon dioxide fixation, as well as the oxidative fragmentation of the pentose substrate in the photorespiration process. Both reactions occur simultaneously and in competition at the same active site. In Cyanidium caldarium (Red alga), this protein is Ribulose bisphosphate carboxylase large chain.